The chain runs to 280 residues: Polyamine aminopropyltransferase 1 (280 aa).

The region spanning D3 to K237 is the PABS domain. Q33 serves as a coordination point for S-methyl-5'-thioadenosine. Positions 64 and 88 each coordinate spermidine. S-methyl-5'-thioadenosine contacts are provided by residues D108 and D139 to G140. D157 serves as the catalytic Proton acceptor. D157 to D160 serves as a coordination point for spermidine.

The protein belongs to the spermidine/spermine synthase family. In terms of assembly, homodimer or homotetramer.

It is found in the cytoplasm. It catalyses the reaction S-adenosyl 3-(methylsulfanyl)propylamine + putrescine = S-methyl-5'-thioadenosine + spermidine + H(+). Its pathway is amine and polyamine biosynthesis; spermidine biosynthesis; spermidine from putrescine: step 1/1. In terms of biological role, catalyzes the irreversible transfer of a propylamine group from the amino donor S-adenosylmethioninamine (decarboxy-AdoMet) to putrescine (1,4-diaminobutane) to yield spermidine. The polypeptide is Polyamine aminopropyltransferase 1 (Aquifex aeolicus (strain VF5)).